A 599-amino-acid polypeptide reads, in one-letter code: Adenine deaminase (599 aa).

This sequence belongs to the metallo-dependent hydrolases superfamily. Adenine deaminase family. Mn(2+) serves as cofactor.

It carries out the reaction adenine + H2O + H(+) = hypoxanthine + NH4(+). This chain is Adenine deaminase, found in Clostridium botulinum (strain Loch Maree / Type A3).